A 256-amino-acid chain; its full sequence is Thiazole synthase (256 aa).

Lysine 95 serves as the catalytic Schiff-base intermediate with DXP. Residues glycine 156, 182–183, and 204–205 each bind 1-deoxy-D-xylulose 5-phosphate; these read AG and NT.

This sequence belongs to the ThiG family. Homotetramer. Forms heterodimers with either ThiH or ThiS.

The protein resides in the cytoplasm. It catalyses the reaction [ThiS sulfur-carrier protein]-C-terminal-Gly-aminoethanethioate + 2-iminoacetate + 1-deoxy-D-xylulose 5-phosphate = [ThiS sulfur-carrier protein]-C-terminal Gly-Gly + 2-[(2R,5Z)-2-carboxy-4-methylthiazol-5(2H)-ylidene]ethyl phosphate + 2 H2O + H(+). The protein operates within cofactor biosynthesis; thiamine diphosphate biosynthesis. Functionally, catalyzes the rearrangement of 1-deoxy-D-xylulose 5-phosphate (DXP) to produce the thiazole phosphate moiety of thiamine. Sulfur is provided by the thiocarboxylate moiety of the carrier protein ThiS. In vitro, sulfur can be provided by H(2)S. In Salmonella paratyphi B (strain ATCC BAA-1250 / SPB7), this protein is Thiazole synthase.